A 925-amino-acid polypeptide reads, in one-letter code: Alanine--tRNA ligase (925 aa).

Residues His611, His615, Cys714, and His718 each coordinate Zn(2+).

The protein belongs to the class-II aminoacyl-tRNA synthetase family. The cofactor is Zn(2+).

The protein localises to the cytoplasm. It carries out the reaction tRNA(Ala) + L-alanine + ATP = L-alanyl-tRNA(Ala) + AMP + diphosphate. In terms of biological role, catalyzes the attachment of alanine to tRNA(Ala) in a two-step reaction: alanine is first activated by ATP to form Ala-AMP and then transferred to the acceptor end of tRNA(Ala). Also edits incorrectly charged Ser-tRNA(Ala) and Gly-tRNA(Ala) via its editing domain. In Methanosarcina acetivorans (strain ATCC 35395 / DSM 2834 / JCM 12185 / C2A), this protein is Alanine--tRNA ligase.